Reading from the N-terminus, the 418-residue chain is Enolase 1 (418 aa).

Gln-162 provides a ligand contact to (2R)-2-phosphoglycerate. Catalysis depends on Glu-204, which acts as the Proton donor. Mg(2+)-binding residues include Asp-241, Glu-285, and Asp-312. (2R)-2-phosphoglycerate-binding residues include Lys-337, Arg-366, Ser-367, and Lys-388. Lys-337 functions as the Proton acceptor in the catalytic mechanism.

It belongs to the enolase family. Mg(2+) serves as cofactor.

The protein resides in the cytoplasm. It is found in the secreted. Its subcellular location is the cell surface. The catalysed reaction is (2R)-2-phosphoglycerate = phosphoenolpyruvate + H2O. It functions in the pathway carbohydrate degradation; glycolysis; pyruvate from D-glyceraldehyde 3-phosphate: step 4/5. Functionally, catalyzes the reversible conversion of 2-phosphoglycerate (2-PG) into phosphoenolpyruvate (PEP). It is essential for the degradation of carbohydrates via glycolysis. In Lactococcus lactis subsp. cremoris (strain SK11), this protein is Enolase 1.